A 688-amino-acid polypeptide reads, in one-letter code: MNENKGNFANKKMIKRAIKDSFIKLSPKTQMENPVMFLVYISSILTTILYAVSLVGIRDSKSSFILGITIILWLTVLFANFAEAIAEGRGKAQADSLRAAKKDVEAHKIPSIEKRDEITKVSSALLKKGDIVIVVAGEQVPADGEVIDGAASVDESAITGESAPVIRESGGDRSAVTGGTTVISDWLIIEVTSEAGESFLDKMISMVEGAARKKTPNEIALQILLISLTIIFLLVTVSLYSYSIFSANQAGVVNPISVTSLVALLVCLAPTTIGALLSSIGIAGMSRLNQANVLAMSGRAIEAAGDVDILMLDKTGTITLGNREACEFIPVNGVNENELADAAQLSSLADETPEGRSIVVLAKEKFGIRGRNIRESNMEFIPFTAKTRMSGVNYNNSEIRKGAAETVKDYVISRGGCYSKECDEVVARISNKGGTPLVVAKDNKVLGVVYLKDIIKQGVQEKFADLRKMGIKTIMITGDNPLTAAAIAAEAGVDDFLAEATPEGKLEMIRDFQIKGHLVAMTGDGTNDAPALAQADVAVAMNTGTQAAKEAGNMVDLDSSPTKLIDIVRIGKQLLMTRGSLTTFSIANDLAKYFAIIPALFIGLYPGLSALNIMNLHSAESAIFSAIIYNALIIVALIPLALKGVKYREVSAGKLLSRNLLVYGLGGIIVPFIAIKVIDVLITAIGIV.

4 helical membrane passes run 37-57 (FLVY…LVGI), 65-85 (ILGI…AEAI), 219-239 (IALQ…TVSL), and 262-282 (VALL…SIGI). Catalysis depends on aspartate 313, which acts as the 4-aspartylphosphate intermediate. ATP-binding positions include aspartate 350, glutamate 354, 383-390 (FTAKTRMS), and lysine 401. Positions 524 and 528 each coordinate Mg(2+). 3 helical membrane-spanning segments follow: residues 594–614 (FAII…LNIM), 622–642 (AIFS…PLAL), and 668–688 (IIVP…IGIV).

Belongs to the cation transport ATPase (P-type) (TC 3.A.3) family. Type IA subfamily. As to quaternary structure, the system is composed of three essential subunits: KdpA, KdpB and KdpC.

The protein resides in the cell membrane. It catalyses the reaction K(+)(out) + ATP + H2O = K(+)(in) + ADP + phosphate + H(+). Its function is as follows. Part of the high-affinity ATP-driven potassium transport (or Kdp) system, which catalyzes the hydrolysis of ATP coupled with the electrogenic transport of potassium into the cytoplasm. This subunit is responsible for energy coupling to the transport system and for the release of the potassium ions to the cytoplasm. The polypeptide is Potassium-transporting ATPase ATP-binding subunit (Clostridium botulinum (strain Alaska E43 / Type E3)).